The sequence spans 1051 residues: DNA-directed RNA polymerase subunit beta (1051 aa).

Belongs to the RNA polymerase beta chain family. In terms of assembly, in plastids the minimal PEP RNA polymerase catalytic core is composed of four subunits: alpha, beta, beta', and beta''. When a (nuclear-encoded) sigma factor is associated with the core the holoenzyme is formed, which can initiate transcription (Potential).

The protein resides in the plastid. The protein localises to the apicoplast. The catalysed reaction is RNA(n) + a ribonucleoside 5'-triphosphate = RNA(n+1) + diphosphate. In terms of biological role, DNA-dependent RNA polymerase catalyzes the transcription of DNA into RNA using the four ribonucleoside triphosphates as substrates. This chain is DNA-directed RNA polymerase subunit beta (rpoB), found in Toxoplasma gondii.